The following is a 295-amino-acid chain: Translational activator of cytochrome c oxidase 1 (295 aa).

K162 carries the post-translational modification N6-acetyllysine. Residues 190–225 (VEDREKKAVNLERALELAIEAGAEDVREAEDEEEEK) are a coiled coil.

The protein belongs to the TACO1 family.

It is found in the mitochondrion. Acts as a translational activator of mitochondrially-encoded cytochrome c oxidase 1. The protein is Translational activator of cytochrome c oxidase 1 of Rattus norvegicus (Rat).